The primary structure comprises 161 residues: Endoribonuclease YbeY (161 aa).

Residues H121, H125, and H131 each contribute to the Zn(2+) site.

It belongs to the endoribonuclease YbeY family. The cofactor is Zn(2+).

The protein localises to the cytoplasm. Single strand-specific metallo-endoribonuclease involved in late-stage 70S ribosome quality control and in maturation of the 3' terminus of the 16S rRNA. The sequence is that of Endoribonuclease YbeY from Xylella fastidiosa (strain 9a5c).